The primary structure comprises 817 residues: Transcription factor SPT20 homolog-like 2 (817 aa).

Residues 1–14 are compositionally biased toward basic and acidic residues; it reads MDRDLEQALDRTEN. Disordered stretches follow at residues 1–28, 249–275, 369–553, 598–630, and 675–697; these read MDRD…RRRY, PQQE…ERKV, PRKK…AAGR, PGSG…AVQA, and QLQQ…LGLS. Polar residues predominate over residues 423-440; sequence SHSSSGPASVSQLSSWKT. Composition is skewed to low complexity over residues 469–479, 494–505, 513–531, and 598–618; these read SSSGKISSGNS, PAAAPAVAAAAP, AAPA…GAAP, and PGSG…SSGG.

It belongs to the SPT20 family.

This Homo sapiens (Human) protein is Transcription factor SPT20 homolog-like 2 (SUPT20HL2).